The following is a 149-amino-acid chain: MSGASARDATLLAFDYGEKRIGVAVGNALTRSARALVVIQNLNREHRFKAVGDLLAEWRPDALVVGLPMHPDGTPHDMTQQAKRFGNQLNGRFGLPVTWVDERYSSVEAEAGLRERNVRGRARAEMLDAEAARVILQQYLDQLSDHEHH.

It belongs to the YqgF nuclease family.

The protein localises to the cytoplasm. Its function is as follows. Could be a nuclease involved in processing of the 5'-end of pre-16S rRNA. This is Putative pre-16S rRNA nuclease from Burkholderia lata (strain ATCC 17760 / DSM 23089 / LMG 22485 / NCIMB 9086 / R18194 / 383).